Here is a 152-residue protein sequence, read N- to C-terminus: Transcriptional regulator MraZ (152 aa).

SpoVT-AbrB domains follow at residues 5–52 (LNPI…THPQ) and 81–124 (ATEV…GKSQ).

It belongs to the MraZ family. In terms of assembly, forms oligomers.

Its subcellular location is the cytoplasm. It is found in the nucleoid. The chain is Transcriptional regulator MraZ from Coxiella burnetii (strain Dugway 5J108-111).